A 490-amino-acid polypeptide reads, in one-letter code: 3-octaprenyl-4-hydroxybenzoate carboxy-lyase (490 aa).

Residue Asn172 participates in Mn(2+) binding. Prenylated FMN-binding positions include 175 to 177, 189 to 191, and 194 to 195; these read IYR, RWL, and RG. Glu238 provides a ligand contact to Mn(2+). Catalysis depends on Asp287, which acts as the Proton donor.

Belongs to the UbiD family. In terms of assembly, homohexamer. Prenylated FMN is required as a cofactor. Mn(2+) serves as cofactor.

It localises to the cell membrane. It catalyses the reaction a 4-hydroxy-3-(all-trans-polyprenyl)benzoate + H(+) = a 2-(all-trans-polyprenyl)phenol + CO2. The protein operates within cofactor biosynthesis; ubiquinone biosynthesis. Catalyzes the decarboxylation of 3-octaprenyl-4-hydroxy benzoate to 2-octaprenylphenol, an intermediate step in ubiquinone biosynthesis. The protein is 3-octaprenyl-4-hydroxybenzoate carboxy-lyase of Idiomarina loihiensis (strain ATCC BAA-735 / DSM 15497 / L2-TR).